Consider the following 244-residue polypeptide: Sortase B (244 aa).

The Cytoplasmic segment spans residues 1-6; the sequence is MRMKRF. The helical transmembrane segment at 7 to 24 threads the bilayer; the sequence is LTIVQILLVVIIIIFGYK. At 25-244 the chain is on the extracellular side; that stretch reads IVQTYIEDKQ…VVVAKIIKVS (220 aa). Cys-223 (acyl-thioester intermediate) is an active-site residue.

Belongs to the bacterial sortase family. Class B subfamily.

The protein localises to the cell membrane. It carries out the reaction The enzyme catalyzes a cell wall sorting reaction in which a surface protein with a sorting signal containing a NPXTN motif is cleaved between the Thr and Asn residue. The resulting threonine carboxyl end of the protein is covalently attached to a pentaglycine cross-bridge of peptidoglycan.. With respect to regulation, inhibited by MTSET (2-(Trimethylammonium)-ethyl-methanethiosulfonate) and E64 ([n- (l-3-trans-carboxyoxirane-2-carbonyl)-l-leucyl]-amido(4-guanido)butane). Inhibited by coptisine. Functionally, transpeptidase that anchors surface proteins to the cell wall. Recognizes and modifies its substrate by proteolytic cleavage of a C-terminal sorting signal. Following cleavage, a covalent intermediate is formed via a thioester bond between the sortase and its substrate, which is then transferred and covalently attached to the cell wall. This sortase recognizes an Asn-Pro-Gln-Thr-Asn (NPQTN) motif in IsdC, which is cleaved by the sortase between the threonine and aspargine residues; may only have 1 substrate in this bacterium. May be dedicated to the process of iron acquisition during bacterial infection. The sequence is that of Sortase B from Staphylococcus aureus (strain NCTC 8325 / PS 47).